The primary structure comprises 620 residues: Arginine--tRNA ligase (620 aa).

The short motif at 147–157 (ANPTGPIHIGG) is the 'HIGH' region element.

It belongs to the class-I aminoacyl-tRNA synthetase family. In terms of assembly, monomer.

The protein localises to the cytoplasm. The enzyme catalyses tRNA(Arg) + L-arginine + ATP = L-arginyl-tRNA(Arg) + AMP + diphosphate. This Bifidobacterium longum (strain DJO10A) protein is Arginine--tRNA ligase.